The chain runs to 89 residues: Small ribosomal subunit protein uS15 (89 aa).

This sequence belongs to the universal ribosomal protein uS15 family. Part of the 30S ribosomal subunit. Forms a bridge to the 50S subunit in the 70S ribosome, contacting the 23S rRNA.

In terms of biological role, one of the primary rRNA binding proteins, it binds directly to 16S rRNA where it helps nucleate assembly of the platform of the 30S subunit by binding and bridging several RNA helices of the 16S rRNA. Its function is as follows. Forms an intersubunit bridge (bridge B4) with the 23S rRNA of the 50S subunit in the ribosome. This is Small ribosomal subunit protein uS15 from Salmonella schwarzengrund (strain CVM19633).